A 599-amino-acid chain; its full sequence is Cytadherence high molecular weight protein 3 (599 aa).

The segment covering 220-236 has biased composition (polar residues); it reads VQVDSGSQNHSFNNSPS. Residues 220 to 241 are disordered; sequence VQVDSGSQNHSFNNSPSLKPPL.

It localises to the cell projection. Its subcellular location is the attachment organelle membrane. Functionally, component of the cytoskeleton-like structure which stabilizes the shape of the wall-less mycoplasma. This cytoskeleton-like network of accessory proteins containing HMW proteins 1 to 5 allows the proper anchoring of cytadhesin proteins in the mycoplasmal membrane at the attachment organelle. Essential for successful surface parasitism. The sequence is that of Cytadherence high molecular weight protein 3 (hmw3) from Mycoplasma genitalium (strain ATCC 33530 / DSM 19775 / NCTC 10195 / G37) (Mycoplasmoides genitalium).